The chain runs to 181 residues: Probable mitochondrial import inner membrane translocase subunit tim-17B.1 (181 aa).

A run of 3 helical transmembrane segments spans residues 17–37 (IGSAFAMGLVGGSIFQAFGGY), 61–81 (GVQFAAWGGMFSTIDCCLVAI), and 109–129 (VMAGSAILGSVILAMIEGVGL). A disordered region spans residues 137 to 181 (AMMDPTQPPPEALDDPRSLGQKSQAEPGLDQTRPFGIPTGLPNLS).

It belongs to the Tim17/Tim22/Tim23 family.

The protein localises to the mitochondrion inner membrane. Functionally, essential component of the TIM23 complex, a complex that mediates the translocation of transit peptide-containing proteins across the mitochondrial inner membrane. In Caenorhabditis elegans, this protein is Probable mitochondrial import inner membrane translocase subunit tim-17B.1.